Consider the following 708-residue polypeptide: O-antigen chain terminator bifunctional methyltransferase/kinase WbdD (708 aa).

The segment at 1–210 (MTKDLNTLVS…VPRPMYLVSN (210 aa)) is methyltransferase. S-adenosyl-L-methionine-binding positions include 16-17 (YQ), arginine 36, glycine 61, 82-87 (DFQQEN), 108-111 (GRIE), and leucine 128. Residues 211–459 (HRVLINDFNQ…AKLPSAEQQR (249 aa)) are kinase. ATP is bound by residues proline 229, histidine 237, 241–243 (RRY), lysine 252, glutamate 274, 309–311 (EKL), methionine 358, and aspartate 369. Residues 485–594 (AGSEALRGQI…EIEKIHRSRS (110 aa)) adopt a coiled-coil conformation. The tract at residues 601–669 (YRYLGLQIHL…RLYRRMNPLP (69 aa)) is required for membrane-binding. The interval 687-708 (VMHPELLPPEVYEIYLKLTKNK) is required for localizing WbdA to the membrane.

It belongs to the WbdD family. As to quaternary structure, homotrimer in solution. Interacts with WbdA.

The protein resides in the cell inner membrane. The enzyme catalyses 3-O-phospho-alpha-D-Man-(1-&gt;2)-alpha-D-Man-(1-&gt;2)-[alpha-D-Man-(1-&gt;3)-alpha-D-Man-(1-&gt;3)-alpha-D-Man-(1-&gt;2)-alpha-D-Man-(1-&gt;2)](n)-alpha-D-Man-(1-&gt;3)-alpha-D-Man-(1-&gt;3)-alpha-D-Man-(1-&gt;3)-alpha-D-GlcNAc-di-trans,octa-cis-undecaprenyl diphosphate + S-adenosyl-L-methionine = 3-O-methylphospho-alpha-D-Man-(1-&gt;2)-alpha-D-Man-(1-&gt;2)-[alpha-D-Man-(1-&gt;3)-alpha-D-Man-(1-&gt;3)-alpha-D-Man-(1-&gt;2)-alpha-D-Man-(1-&gt;2)](n)-alpha-D-Man-(1-&gt;3)-alpha-D-Man-(1-&gt;3)-alpha-D-Man-(1-&gt;3)-alpha-D-GlcNAc-di-trans,octa-cis-undecaprenyl diphosphate + S-adenosyl-L-homocysteine. It catalyses the reaction alpha-D-Man-(1-&gt;2)-alpha-D-Man-(1-&gt;2)-[alpha-D-Man-(1-&gt;3)-alpha-D-Man-(1-&gt;3)-alpha-D-Man-(1-&gt;2)-alpha-D-Man-(1-&gt;2)](n)-alpha-D-Man-(1-&gt;3)-alpha-D-Man-(1-&gt;3)-alpha-D-Man-(1-&gt;3)-alpha-D-GlcNAc-di-trans,octa-cis-undecaprenyl diphosphate + ATP = 3-O-phospho-alpha-D-Man-(1-&gt;2)-alpha-D-Man-(1-&gt;2)-[alpha-D-Man-(1-&gt;3)-alpha-D-Man-(1-&gt;3)-alpha-D-Man-(1-&gt;2)-alpha-D-Man-(1-&gt;2)](n)-alpha-D-Man-(1-&gt;3)-alpha-D-Man-(1-&gt;3)-alpha-D-Man-(1-&gt;3)-alpha-D-GlcNAc-di-trans,octa-cis-undecaprenyl diphosphate + ADP + H(+). It participates in bacterial outer membrane biogenesis; LPS O-antigen biosynthesis. Its function is as follows. Regulates the length of the LPS O-antigen polysaccharide chain. Stops the polymerization of the chain by phosphorylating and then methylating the phosphate on the terminal sugar. This terminal modification is essential for export of the O-antigen across the inner membrane. WbdD is also required for correct localization of the WbdA mannosyltransferase. This chain is O-antigen chain terminator bifunctional methyltransferase/kinase WbdD, found in Escherichia coli.